A 486-amino-acid polypeptide reads, in one-letter code: Glutamyl-tRNA(Gln) amidotransferase subunit A (486 aa).

Catalysis depends on charge relay system residues Lys-77 and Ser-152. Ser-176 serves as the catalytic Acyl-ester intermediate.

Belongs to the amidase family. GatA subfamily. In terms of assembly, heterotrimer of A, B and C subunits.

It catalyses the reaction L-glutamyl-tRNA(Gln) + L-glutamine + ATP + H2O = L-glutaminyl-tRNA(Gln) + L-glutamate + ADP + phosphate + H(+). Allows the formation of correctly charged Gln-tRNA(Gln) through the transamidation of misacylated Glu-tRNA(Gln) in organisms which lack glutaminyl-tRNA synthetase. The reaction takes place in the presence of glutamine and ATP through an activated gamma-phospho-Glu-tRNA(Gln). The chain is Glutamyl-tRNA(Gln) amidotransferase subunit A from Lactococcus lactis subsp. cremoris (strain SK11).